The sequence spans 368 residues: 3-dehydroquinate synthase (368 aa).

Residues 71 to 76 (DGESFK), 105 to 109 (GVIGD), 129 to 130 (TT), Lys142, Lys151, and 169 to 172 (TLRT) each bind NAD(+). Positions 184, 247, and 264 each coordinate Zn(2+).

It belongs to the sugar phosphate cyclases superfamily. Dehydroquinate synthase family. It depends on NAD(+) as a cofactor. Requires Co(2+) as cofactor. Zn(2+) serves as cofactor.

Its subcellular location is the cytoplasm. It catalyses the reaction 7-phospho-2-dehydro-3-deoxy-D-arabino-heptonate = 3-dehydroquinate + phosphate. Its pathway is metabolic intermediate biosynthesis; chorismate biosynthesis; chorismate from D-erythrose 4-phosphate and phosphoenolpyruvate: step 2/7. In terms of biological role, catalyzes the conversion of 3-deoxy-D-arabino-heptulosonate 7-phosphate (DAHP) to dehydroquinate (DHQ). In Ralstonia nicotianae (strain ATCC BAA-1114 / GMI1000) (Ralstonia solanacearum), this protein is 3-dehydroquinate synthase.